The following is a 259-amino-acid chain: Ubiquitin-conjugating enzyme E2 J2 (259 aa).

Residues 1–226 (MSSTSSKRAP…AGLQQANRHH (226 aa)) are Cytoplasmic-facing. Residues 12 to 162 (TATQRLKQDY…DKVFCELFPE (151 aa)) enclose the UBC core domain. C94 functions as the Glycyl thioester intermediate in the catalytic mechanism. The helical; Anchor for type IV membrane protein transmembrane segment at 227–247 (GLLGGALANLFVIVGFAAFAY) threads the bilayer. The Lumenal segment spans residues 248–259 (TVKYVLRSIAQE).

This sequence belongs to the ubiquitin-conjugating enzyme family. Auto-ubiquitinated.

The protein localises to the endoplasmic reticulum membrane. The catalysed reaction is S-ubiquitinyl-[E1 ubiquitin-activating enzyme]-L-cysteine + [E2 ubiquitin-conjugating enzyme]-L-cysteine = [E1 ubiquitin-activating enzyme]-L-cysteine + S-ubiquitinyl-[E2 ubiquitin-conjugating enzyme]-L-cysteine.. Its pathway is protein modification; protein ubiquitination. Functionally, catalyzes the covalent attachment of ubiquitin to other proteins. Seems to function in the selective degradation of misfolded membrane proteins from the endoplasmic reticulum (ERAD). In cooperation with the GATOR2 complex, catalyzes 'Lys-6'-linked ubiquitination of NPRL2. The protein is Ubiquitin-conjugating enzyme E2 J2 (UBE2J2) of Homo sapiens (Human).